The primary structure comprises 699 residues: Zinc finger protein 782 (699 aa).

Residues 8–79 (VSFQDVTVEF…EKEKGFLSRN (72 aa)) form the KRAB domain. The disordered stretch occupies residues 75-95 (FLSRNSPEDSQPDEISEKSPE). The segment at 279 to 307 (CFCRITHKTLTGGKSFSQKSHIREHHRVH) adopts a C2H2-type 1; degenerate zinc-finger fold. The C2H2-type 2; degenerate zinc finger occupies 316-332 (GKSFNRNSTLPVHQRTH). The segment at 337 to 360 (YSDYHPCTETFSYQSTFSVHQKVH) adopts a C2H2-type 3; degenerate zinc-finger fold. The C2H2-type 4; degenerate zinc-finger motif lies at 366-388 (YEYNECGKSCSMNSHLIWPQKSH). C2H2-type zinc fingers lie at residues 394–416 (YECPECGKAFSEKSRLRKHQRTH), 422–444 (YKCDGCDKAFSAKSGLRIHQRTH), 450–472 (FECHECGKSFNYKSILIVHQRTH), 478–500 (FECNECGKSFSHMSGLRNHRRTH), 506–528 (YKCDECGKAFKLKSGLRKHHRTH), 534–556 (YKCNQCGKAFGQKSQLRGHHRIH), 562–584 (YKCNHCGEAFSQKSNLRVHHRTH), 590–612 (YQCEECGKTFRQKSNLRGHQRTH), 618–640 (YECNECGKAFSEKSVLRKHQRTH), 646–668 (YNCNQCGEAFSQKSNLRVHQRTH), and 674–696 (YKCDKCGRTFSQKSSLREHQKAH).

It belongs to the krueppel C2H2-type zinc-finger protein family.

It is found in the nucleus. In terms of biological role, may be involved in transcriptional regulation. The sequence is that of Zinc finger protein 782 (ZNF782) from Homo sapiens (Human).